The sequence spans 75 residues: UPF0291 protein Teth39_0326 (75 aa).

The protein belongs to the UPF0291 family.

It is found in the cytoplasm. This Thermoanaerobacter pseudethanolicus (strain ATCC 33223 / 39E) (Clostridium thermohydrosulfuricum) protein is UPF0291 protein Teth39_0326.